A 273-amino-acid chain; its full sequence is Putative B3 domain-containing protein At5g58280 (273 aa).

The segment at residues F127 to N218 is a DNA-binding region (TF-B3). Residues S225–A273 are disordered. The segment covering S236–D252 has biased composition (acidic residues). The span at R258–A273 shows a compositional bias: basic residues.

Its subcellular location is the nucleus. This is Putative B3 domain-containing protein At5g58280 from Arabidopsis thaliana (Mouse-ear cress).